We begin with the raw amino-acid sequence, 232 residues long: Ashwin (232 aa).

Phosphoserine is present on residues Ser-112, Ser-182, Ser-184, Ser-189, and Ser-193. The segment at 163–232 is disordered; it reads KMEHNNNDTQ…KRKIQHVTWP (70 aa). Phosphothreonine occurs at positions 197 and 198. Basic and acidic residues predominate over residues 206–224; that stretch reads APKEEAEATNHLKPPEVKR.

This sequence belongs to the ashwin family. Component of the tRNA-splicing ligase complex.

The protein resides in the nucleus. The chain is Ashwin from Mus musculus (Mouse).